A 353-amino-acid chain; its full sequence is Protein RecA (353 aa).

An ATP-binding site is contributed by 67–74 (GPESSGKT).

It belongs to the RecA family.

The protein resides in the cytoplasm. Can catalyze the hydrolysis of ATP in the presence of single-stranded DNA, the ATP-dependent uptake of single-stranded DNA by duplex DNA, and the ATP-dependent hybridization of homologous single-stranded DNAs. It interacts with LexA causing its activation and leading to its autocatalytic cleavage. The sequence is that of Protein RecA from Shewanella loihica (strain ATCC BAA-1088 / PV-4).